The sequence spans 444 residues: N-succinylarginine dihydrolase (444 aa).

Substrate-binding positions include 19–28 (SGLSVGNIAS), Asn110, and 137–138 (HR). Glu174 is an active-site residue. Arg214 contacts substrate. His250 is an active-site residue. Substrate is bound by residues Asp252 and Asn362. The active-site Nucleophile is Cys368.

Belongs to the succinylarginine dihydrolase family. In terms of assembly, homodimer.

It carries out the reaction N(2)-succinyl-L-arginine + 2 H2O + 2 H(+) = N(2)-succinyl-L-ornithine + 2 NH4(+) + CO2. It participates in amino-acid degradation; L-arginine degradation via AST pathway; L-glutamate and succinate from L-arginine: step 2/5. Functionally, catalyzes the hydrolysis of N(2)-succinylarginine into N(2)-succinylornithine, ammonia and CO(2). This chain is N-succinylarginine dihydrolase, found in Aliivibrio fischeri (strain ATCC 700601 / ES114) (Vibrio fischeri).